The primary structure comprises 702 residues: Polyribonucleotide nucleotidyltransferase (702 aa).

Positions 487 and 493 each coordinate Mg(2+). Positions 554 to 613 (PKILTMQINPDKIRDVIGPSGKQINKIIEETGVKIDIEQDGTIFISSVNEEMNKKAKKII) constitute a KH domain. One can recognise an S1 motif domain in the interval 623 to 691 (GQVYLGKVKR…KQGRVNLSRK (69 aa)).

The protein belongs to the polyribonucleotide nucleotidyltransferase family. Mg(2+) is required as a cofactor.

Its subcellular location is the cytoplasm. The enzyme catalyses RNA(n+1) + phosphate = RNA(n) + a ribonucleoside 5'-diphosphate. Functionally, involved in mRNA degradation. Catalyzes the phosphorolysis of single-stranded polyribonucleotides processively in the 3'- to 5'-direction. The protein is Polyribonucleotide nucleotidyltransferase of Anoxybacillus flavithermus (strain DSM 21510 / WK1).